The following is a 594-amino-acid chain: Zinc finger protein 467 (594 aa).

The interval 1–70 is disordered; sequence MRETLEALNS…HTEQAEAPCM (70 aa). A Glycyl lysine isopeptide (Lys-Gly) (interchain with G-Cter in SUMO2) cross-link involves residue Lys-97. 12 consecutive C2H2-type zinc fingers follow at residues 160–182, 188–210, 216–238, 244–266, 272–294, 300–322, 355–377, 430–452, 458–480, 486–508, 514–536, and 542–564; these read YGCEECERRFRDQLTLRLHQRLH, CACPDCGRSFTQRAHMLLHQRSH, FPCSECDKRFSKKAHLTRHLRTH, YPCAECGKRFSQKIHLGSHQKTH, FPCTECEKRFRKKTHLIRHQRIH, YQCTQCTRSFTHKQHLVRHQRVH, FACSHCGQSFGWKKNLATHQSLH, FFCPDCGRGFAHGQHLARHRRVH, FACAQCGRRFGSRPNLVAHSRAH, FACAQCGRRFSRKSHLGRHQAVH, HACAVCARCFSSKTNLVRHQAIH, and FSCPQCAKSFSRKTHLVRHQRIH. The interval 313–350 is disordered; that stretch reads QHLVRHQRVHDAASRTRSSPDIPATPHPPTASLAPSPT. Lys-368 is covalently cross-linked (Glycyl lysine isopeptide (Lys-Gly) (interchain with G-Cter in SUMO2)).

It belongs to the krueppel C2H2-type zinc-finger protein family. Interacts with STAT3. Enhances STAT3 activity by keeping it in the nucleus.

The protein resides in the nucleus. Functionally, transcription factor that promotes adipocyte differentiation and suppresses osteoblast differentiation in the bone marrow. Enhances the osteoclast-supporting ability of stromal cells. Binds with STAT3 the consensus sequence 5'-CTTCTGGGAAGA-3' of the acute phase response element (APRE). Transactivates several promoters including FOS, OSM and PPARG. Recruits a histone deacetylase complex. This chain is Zinc finger protein 467 (Znf467), found in Rattus norvegicus (Rat).